The following is a 401-amino-acid chain: Nicotinate phosphoribosyltransferase (401 aa).

His-224 is subject to Phosphohistidine; by autocatalysis.

Belongs to the NAPRTase family. Transiently phosphorylated on a His residue during the reaction cycle. Phosphorylation strongly increases the affinity for substrates and increases the rate of nicotinate D-ribonucleotide production. Dephosphorylation regenerates the low-affinity form of the enzyme, leading to product release.

The catalysed reaction is nicotinate + 5-phospho-alpha-D-ribose 1-diphosphate + ATP + H2O = nicotinate beta-D-ribonucleotide + ADP + phosphate + diphosphate. The protein operates within cofactor biosynthesis; NAD(+) biosynthesis; nicotinate D-ribonucleotide from nicotinate: step 1/1. Catalyzes the synthesis of beta-nicotinate D-ribonucleotide from nicotinate and 5-phospho-D-ribose 1-phosphate at the expense of ATP. This is Nicotinate phosphoribosyltransferase from Pseudomonas putida (strain GB-1).